Consider the following 1199-residue polypeptide: Metabotropic glutamate receptor 1 (1199 aa).

The N-terminal stretch at M1–I18 is a signal peptide. The Extracellular segment spans residues L19–E592. A disulfide bridge connects residues C67 and C109. L-glutamate is bound at residue Y74. N98 carries an N-linked (GlcNAc...) asparagine glycan. Residues S165 and S186–T188 each bind L-glutamate. A glycan (N-linked (GlcNAc...) asparagine) is linked at N223. Y236 contacts L-glutamate. An intrachain disulfide couples C289 to C291. D318 is an L-glutamate binding site. The cysteines at positions 378 and 394 are disulfide-linked. An N-linked (GlcNAc...) asparagine glycan is attached at N397. Position 409 (K409) interacts with L-glutamate. The cysteines at positions 432 and 439 are disulfide-linked. The N-linked (GlcNAc...) asparagine glycan is linked to N515. The chain crosses the membrane as a helical span at residues S593–V615. The Cytoplasmic portion of the chain corresponds to L616–E629. The chain crosses the membrane as a helical span at residues L630–A650. Topologically, residues K651 to Y658 are extracellular. Residues C657 and C746 are joined by a disulfide bond. A helical transmembrane segment spans residues L659–N680. Over R681 to A703 the chain is Cytoplasmic. The chain crosses the membrane as a helical span at residues W704–M727. Over E728–N750 the chain is Extracellular. A helical transmembrane segment spans residues L751–F772. Over K773–K785 the chain is Cytoplasmic. Residues Y786–G807 form a helical membrane-spanning segment. At S808–T815 the chain is on the extracellular side. Residues C816–A840 form a helical membrane-spanning segment. The Cytoplasmic segment spans residues K841–L1199. Residue S853 is modified to Phosphoserine. The residue at position 871 (T871) is a Phosphothreonine. Disordered regions lie at residues G882–K905, E959–S1036, and H1056–H1081. Positions N885 to W895 are enriched in polar residues. A phosphoserine mark is found at S894 and S969. A compositionally biased stretch (pro residues) spans G1012 to Q1033. A Phosphoserine modification is found at S1098. The segment at E1120 to C1177 is disordered. Positions T1125–L1136 are enriched in acidic residues. S1147 is modified (phosphoserine). T1151 carries the post-translational modification Phosphothreonine. S1154 carries the phosphoserine modification. Positions S1159–V1175 are enriched in low complexity.

It belongs to the G-protein coupled receptor 3 family. Homodimer; disulfide-linked. The PPXXF motif binds HOMER1, HOMER2 and HOMER3. Interacts with TAMALIN. Interacts with RYR1, RYR2, ITPR1, SHANK1 and SHANK3. Interacts with SIAH1. Predominantly expressed in cerebellar Purkinje cells, CA2-CA3 pyramidal cells of the hippocampus, and mitral and tufted cells of the olfactory bulb.

Its subcellular location is the cell membrane. The protein localises to the postsynaptic cell membrane. It is found in the cell projection. It localises to the dendrite. Functionally, G-protein coupled receptor for glutamate. Ligand binding causes a conformation change that triggers signaling via guanine nucleotide-binding proteins (G proteins) and modulates the activity of down-stream effectors. Signaling activates a phosphatidylinositol-calcium second messenger system. May participate in the central action of glutamate in the CNS, such as long-term potentiation in the hippocampus and long-term depression in the cerebellum. May function in the light response in the retina. Induces GRID1 and GRID2 cation-channel activation via GNAQ-PLC-PKC pathway in dopaminergic neurons and cerebellar Purkinje cell, respectively. This is Metabotropic glutamate receptor 1 (Grm1) from Rattus norvegicus (Rat).